Reading from the N-terminus, the 275-residue chain is MNTKEIVNKYEFKFNKNLGQNFLIDESVLEDIIEGAEINKEDTVIEIGPGVGTLTKELLERAKEVYSIELDGDLIPILQEELKEYNNFTLIHKDALKIDFNELMENKDSIKLVANLPYYVTTPIISRLLTEKCDFKSLTIMIQKEVAERINAEPNCKEYGSLTVLVQYYCNTKIIRKVSPNSFIPRPKVDSIVIKLDRLSEPRVRVKSQKLFFNVVRSSFNMRRKTLWNSLKSLNIDKESMENAFERAGIDPKRRGETLSIEEFGKLSDCIYDIL.

Residues Asn21, Leu23, Gly48, Glu69, Asp94, and Asn115 each contribute to the S-adenosyl-L-methionine site.

This sequence belongs to the class I-like SAM-binding methyltransferase superfamily. rRNA adenine N(6)-methyltransferase family. RsmA subfamily.

The protein resides in the cytoplasm. The enzyme catalyses adenosine(1518)/adenosine(1519) in 16S rRNA + 4 S-adenosyl-L-methionine = N(6)-dimethyladenosine(1518)/N(6)-dimethyladenosine(1519) in 16S rRNA + 4 S-adenosyl-L-homocysteine + 4 H(+). Functionally, specifically dimethylates two adjacent adenosines (A1518 and A1519) in the loop of a conserved hairpin near the 3'-end of 16S rRNA in the 30S particle. May play a critical role in biogenesis of 30S subunits. This Clostridium botulinum (strain ATCC 19397 / Type A) protein is Ribosomal RNA small subunit methyltransferase A.